The sequence spans 440 residues: Phosphoglycerate kinase, glycosomal (440 aa).

Positions 23, 24, 25, 26, 39, 61, 62, 64, 65, 135, 171, and 172 each coordinate (2R)-3-phosphoglycerate. G217 is a CDP binding site. Residue A218 coordinates ADP. Residues A218 and K219 each contribute to the AMP site. An ATP-binding site is contributed by A218. Residue A218 participates in Mg(2+) binding. A (2R)-3-phosphoglycerate-binding site is contributed by K219. Position 222 (D222) interacts with CDP. A Mg(2+)-binding site is contributed by D222. The ADP site is built by K223 and G241. Position 223 (K223) interacts with AMP. G241 is a CDP binding site. Residues A242 and A314 each contribute to the AMP site. ATP-binding residues include A242 and A314. Residues A314 and N338 each contribute to the ADP site. G339 and F344 together coordinate CDP. ADP is bound by residues F344, E345, D377, and S378. Residue E345 participates in AMP binding. 2 residues coordinate ATP: D377 and S378. D377 contacts Mg(2+).

Belongs to the phosphoglycerate kinase family. In terms of assembly, monomer. The cofactor is Mg(2+).

The protein localises to the glycosome. The enzyme catalyses (2R)-3-phosphoglycerate + ATP = (2R)-3-phospho-glyceroyl phosphate + ADP. The protein operates within carbohydrate degradation; glycolysis; pyruvate from D-glyceraldehyde 3-phosphate: step 2/5. This Trypanosoma brucei brucei protein is Phosphoglycerate kinase, glycosomal.